The primary structure comprises 209 residues: Holliday junction branch migration complex subunit RuvA (209 aa).

The segment at 1 to 64 (MIGRIRGMLI…EDAQSLYGFA (64 aa)) is domain I. The domain II stretch occupies residues 65 to 143 (SRLDRNLFRL…QLEGQFVPSQ (79 aa)). A flexible linker region spans residues 144–157 (PDVPTGAGAATASQ). Residues 158–209 (AGPDPREEAEAALIALGYKPQEAAKAISKVAGPDMNSETLIRLALKNMIPAG) are domain III.

Belongs to the RuvA family. Homotetramer. Forms an RuvA(8)-RuvB(12)-Holliday junction (HJ) complex. HJ DNA is sandwiched between 2 RuvA tetramers; dsDNA enters through RuvA and exits via RuvB. An RuvB hexamer assembles on each DNA strand where it exits the tetramer. Each RuvB hexamer is contacted by two RuvA subunits (via domain III) on 2 adjacent RuvB subunits; this complex drives branch migration. In the full resolvosome a probable DNA-RuvA(4)-RuvB(12)-RuvC(2) complex forms which resolves the HJ.

Its subcellular location is the cytoplasm. Functionally, the RuvA-RuvB-RuvC complex processes Holliday junction (HJ) DNA during genetic recombination and DNA repair, while the RuvA-RuvB complex plays an important role in the rescue of blocked DNA replication forks via replication fork reversal (RFR). RuvA specifically binds to HJ cruciform DNA, conferring on it an open structure. The RuvB hexamer acts as an ATP-dependent pump, pulling dsDNA into and through the RuvAB complex. HJ branch migration allows RuvC to scan DNA until it finds its consensus sequence, where it cleaves and resolves the cruciform DNA. The chain is Holliday junction branch migration complex subunit RuvA from Marinobacter nauticus (strain ATCC 700491 / DSM 11845 / VT8) (Marinobacter aquaeolei).